A 223-amino-acid polypeptide reads, in one-letter code: Large ribosomal subunit protein bL25 (223 aa).

The protein belongs to the bacterial ribosomal protein bL25 family. CTC subfamily. In terms of assembly, part of the 50S ribosomal subunit; part of the 5S rRNA/L5/L18/L25 subcomplex. Contacts the 5S rRNA. Binds to the 5S rRNA independently of L5 and L18.

Functionally, this is one of the proteins that binds to the 5S RNA in the ribosome where it forms part of the central protuberance. This chain is Large ribosomal subunit protein bL25, found in Albidiferax ferrireducens (strain ATCC BAA-621 / DSM 15236 / T118) (Rhodoferax ferrireducens).